The primary structure comprises 327 residues: Putative hydroxymethylpyrimidine/phosphomethylpyrimidine kinase C18B5.05c (327 aa).

Q54 provides a ligand contact to 4-amino-5-hydroxymethyl-2-methylpyrimidine.

This sequence belongs to the ThiD family.

Its subcellular location is the cytoplasm. The protein resides in the nucleus. The enzyme catalyses 4-amino-5-hydroxymethyl-2-methylpyrimidine + ATP = 4-amino-2-methyl-5-(phosphooxymethyl)pyrimidine + ADP + H(+). The catalysed reaction is 4-amino-2-methyl-5-(phosphooxymethyl)pyrimidine + ATP = 4-amino-2-methyl-5-(diphosphooxymethyl)pyrimidine + ADP. The protein operates within cofactor biosynthesis; thiamine diphosphate biosynthesis; 4-amino-2-methyl-5-diphosphomethylpyrimidine from 5-amino-1-(5-phospho-D-ribosyl)imidazole: step 2/3. It participates in cofactor biosynthesis; thiamine diphosphate biosynthesis; 4-amino-2-methyl-5-diphosphomethylpyrimidine from 5-amino-1-(5-phospho-D-ribosyl)imidazole: step 3/3. Its function is as follows. Catalyzes the phosphorylation of hydroxymethylpyrimidine phosphate (HMP-P) to HMP-PP, and of HMP to HMP-P. This chain is Putative hydroxymethylpyrimidine/phosphomethylpyrimidine kinase C18B5.05c, found in Schizosaccharomyces pombe (strain 972 / ATCC 24843) (Fission yeast).